The sequence spans 656 residues: Histidine decarboxylase (656 aa).

Substrate-binding residues include Tyr-84 and His-197. Position 308 is an N6-(pyridoxal phosphate)lysine (Lys-308). 2 positions are modified to phosphoserine; by PKA: Ser-343 and Ser-362. Residues 481–502 form a disordered region; the sequence is HCTSQPSPRAKNLIPPPVTRDS.

It belongs to the group II decarboxylase family. Homodimer. The cofactor is pyridoxal 5'-phosphate. In terms of processing, may be post-translationally processed. In terms of tissue distribution, brain, glandular regions of the stomach, mast cells and fetal liver.

It catalyses the reaction L-histidine + H(+) = histamine + CO2. It functions in the pathway amine and polyamine biosynthesis; histamine biosynthesis; histamine from L-histidine: step 1/1. Its activity is regulated as follows. Phosphorylation of brain HDC by cAMP-dependent protein kinase leads to enzyme inactivation. In terms of biological role, catalyzes the biosynthesis of histamine from histidine. The polypeptide is Histidine decarboxylase (Hdc) (Rattus norvegicus (Rat)).